The sequence spans 358 residues: Starch-binding domain-containing protein 1 (358 aa).

Over 1 to 6 the chain is Extracellular; that stretch reads MGAVWS. A helical transmembrane segment spans residues 7 to 23; sequence ALLVGGGLAGALFVWLL. The Cytoplasmic segment spans residues 24-358; sequence RGGPGDTGKD…KVVHAWWGIH (335 aa). Residues 30–42 are compositionally biased toward basic and acidic residues; that stretch reads TGKDGDAEQEKDA. 2 disordered regions span residues 30 to 70 and 104 to 151; these read TGKD…QELV and SREV…SPMG. Low complexity predominate over residues 50 to 66; sequence PGGHQSGSSGLSPGPSG. Serine 65 is modified (phosphoserine). Over residues 106-115 the composition is skewed to basic and acidic residues; sequence EVCDNSREHV. Serine 117 carries the phosphoserine modification. A compositionally biased stretch (polar residues) spans 126 to 140; sequence PATSETSNSRSYSEV. Phosphoserine is present on residues serine 148, serine 175, serine 188, and serine 194. The LIR motif lies at 200-206; it reads HEEWEMV. Phosphoserine is present on residues serine 210, serine 211, and serine 220. The CBM20 domain maps to 258 to 357; that stretch reads PAGSQQVSVR…DKVVHAWWGI (100 aa).

In terms of assembly, interacts with the ATG8 family proteins GABARAP and GABARAPL1. Interacts with several glycogen-associated proteins, such as GYS2 (liver glycogen synthase), GDE (glycogen debranching enzyme), GBE1 (glycogen branching enzyme 1) and EPM2A (Laforin). In terms of processing, ubiquitinated, which leads to proteasomal degradation. As to expression, expressed at high level in skeletal and cardiac muscles. Moderately expressed in liver and placenta. No expression is found in pancreas, kidney or lung. Present in skeletal muscle, heart and placenta (at protein level).

It localises to the preautophagosomal structure membrane. It is found in the endoplasmic reticulum membrane. The protein localises to the cell membrane. The protein resides in the sarcolemma. Its subcellular location is the T-tubule. Functionally, acts as a cargo receptor for glycogen. Delivers its cargo to an autophagic pathway called glycophagy, resulting in the transport of glycogen to lysosomes. In Homo sapiens (Human), this protein is Starch-binding domain-containing protein 1.